The chain runs to 404 residues: Cytochrome b561 and DOMON domain-containing protein At5g35735 (404 aa).

The signal sequence occupies residues 1 to 25 (MDRTQSPKTALFAVLATLLVLTVNG). Residues 49–164 (LGSFLHWTYN…ITANQLWQVG (116 aa)) form the DOMON domain. One can recognise a Cytochrome b561 domain in the interval 170–369 (VPASHQTSGD…LEPLTWFIVL (200 aa)). A disordered region spans residues 172–207 (ASHQTSGDNMRSSGRIDFRTGQASAGGGGSGDRLRK). Over residues 173-183 (SHQTSGDNMRS) the composition is skewed to polar residues. 2 helical membrane passes run 210–230 (THGV…AMMA) and 241–261 (WFYL…AGWA). Heme b contacts are provided by His211, His245, and His278. Residues 280 to 300 (NLGIALFTFATLQVFALLVRP) form a helical membrane-spanning segment. His314 serves as a coordination point for heme b. A run of 2 helical transmembrane segments spans residues 316–336 (TVGY…FDIL) and 349–369 (ILIF…FIVL). Positions 376 to 404 (GNTVAAPTSSKYSNGVNGTTTTGPHHQDA) are disordered. Positions 380 to 404 (AAPTSSKYSNGVNGTTTTGPHHQDA) are enriched in polar residues.

It depends on heme b as a cofactor.

The protein resides in the membrane. Functionally, may act as a catecholamine-responsive trans-membrane electron transporter. The sequence is that of Cytochrome b561 and DOMON domain-containing protein At5g35735 from Arabidopsis thaliana (Mouse-ear cress).